The following is a 450-amino-acid chain: Probable rhamnogalacturonase E (450 aa).

Positions 1–22 (MTWSTSFLSVHFFAFITTSIHA) are cleaved as a signal peptide. A disulfide bridge links C43 with C69. 3 N-linked (GlcNAc...) asparagine glycosylation sites follow: N54, N92, and N131. The Proton donor role is filled by D222. C224 and C241 are oxidised to a cystine. N-linked (GlcNAc...) asparagine glycans are attached at residues N242 and N257. Residue H297 is part of the active site. Residues N324 and N329 are each glycosylated (N-linked (GlcNAc...) asparagine). Cystine bridges form between C347–C353 and C375–C384.

It belongs to the glycosyl hydrolase 28 family.

It localises to the secreted. In terms of biological role, pectinolytic enzymes consist of four classes of enzymes: pectine lyase, polygalacturonase, pectin methylesterase and rhamnogalacturonase. Hydrolyzes alpha-D-galacturonopyranosyl-(1,2)-alpha-L-rhamnopyranosyl linkages in the backbone of the hairy regions of pectins. This chain is Probable rhamnogalacturonase E (rhgE), found in Aspergillus niger.